A 74-amino-acid chain; its full sequence is Large ribosomal subunit protein bL31 (74 aa).

The protein belongs to the bacterial ribosomal protein bL31 family. Type A subfamily. Part of the 50S ribosomal subunit.

Binds the 23S rRNA. The polypeptide is Large ribosomal subunit protein bL31 (Synechococcus sp. (strain JA-2-3B'a(2-13)) (Cyanobacteria bacterium Yellowstone B-Prime)).